The primary structure comprises 200 residues: GTP cyclohydrolase 1 (200 aa).

Zn(2+)-binding residues include cysteine 87, histidine 90, and cysteine 158.

Belongs to the GTP cyclohydrolase I family. As to quaternary structure, toroid-shaped homodecamer, composed of two pentamers of five dimers.

The enzyme catalyses GTP + H2O = 7,8-dihydroneopterin 3'-triphosphate + formate + H(+). It participates in cofactor biosynthesis; 7,8-dihydroneopterin triphosphate biosynthesis; 7,8-dihydroneopterin triphosphate from GTP: step 1/1. This is GTP cyclohydrolase 1 from Xanthomonas campestris pv. campestris (strain ATCC 33913 / DSM 3586 / NCPPB 528 / LMG 568 / P 25).